A 390-amino-acid polypeptide reads, in one-letter code: Ammonium/H(+) antiporter subunit AmhT (390 aa).

A run of 10 helical transmembrane segments spans residues 2 to 22 (VIPELFSAGLILLLLFITGFV), 31 to 51 (VVIFILLGIAVGGLLSGSHLL), 52 to 72 (HFAGEVGIVLLFFMLGMEFPL), 94 to 114 (FGVTMAICMMMGLDVITSLII), 143 to 163 (FMLGLLIFEDLVAPILVAVLV), 178 to 198 (LLVVKVVALVAGAVILGVFLF), 212 to 232 (DLFILFVIGLALMYGGLALYL), 266 to 286 (LLLPLFFLYFGTTISFSEGIP), 288 to 308 (IPLLILVLVWSVIAKVIVGVL), and 351 to 371 (VFILASAMIGILLFQFAPSIA).

The protein belongs to the monovalent cation:proton antiporter 2 (CPA2) transporter (TC 2.A.37) family. As to quaternary structure, interacts with AmhM.

The protein localises to the cell membrane. With respect to regulation, amhT alone exhibits antiport activity, but interaction with AmhM confers different properties, such as higher KM for potassium. Functionally, ammonium/proton antiporter that mediates the efflux of ammonium ions. Can also transport potassium or rubidium, but not sodium or lithium. The chain is Ammonium/H(+) antiporter subunit AmhT (amhT) from Alkalihalophilus pseudofirmus (strain ATCC BAA-2126 / JCM 17055 / OF4) (Bacillus pseudofirmus).